Consider the following 101-residue polypeptide: Small ribosomal subunit protein uS14 (101 aa).

It belongs to the universal ribosomal protein uS14 family. As to quaternary structure, part of the 30S ribosomal subunit. Contacts proteins S3 and S10.

Binds 16S rRNA, required for the assembly of 30S particles and may also be responsible for determining the conformation of the 16S rRNA at the A site. The protein is Small ribosomal subunit protein uS14 of Methylibium petroleiphilum (strain ATCC BAA-1232 / LMG 22953 / PM1).